We begin with the raw amino-acid sequence, 417 residues long: CinA-like protein (417 aa).

Belongs to the CinA family.

This is CinA-like protein from Microcystis aeruginosa (strain NIES-843 / IAM M-2473).